Reading from the N-terminus, the 642-residue chain is Threonine--tRNA ligase (642 aa).

Residues 1–61 (MPVITLPDGS…DADATVAIIT (61 aa)) form the TGS domain. A catalytic region spans residues 243–534 (DHRKIGKQLD…LTEEFAGFFP (292 aa)). Positions 334, 385, and 511 each coordinate Zn(2+).

The protein belongs to the class-II aminoacyl-tRNA synthetase family. Homodimer. It depends on Zn(2+) as a cofactor.

The protein localises to the cytoplasm. The catalysed reaction is tRNA(Thr) + L-threonine + ATP = L-threonyl-tRNA(Thr) + AMP + diphosphate + H(+). Functionally, catalyzes the attachment of threonine to tRNA(Thr) in a two-step reaction: L-threonine is first activated by ATP to form Thr-AMP and then transferred to the acceptor end of tRNA(Thr). Also edits incorrectly charged L-seryl-tRNA(Thr). This Edwardsiella ictaluri (strain 93-146) protein is Threonine--tRNA ligase.